A 417-amino-acid chain; its full sequence is Tryptophan synthase beta chain (417 aa).

K108 is subject to N6-(pyridoxal phosphate)lysine.

It belongs to the TrpB family. In terms of assembly, tetramer of two alpha and two beta chains. Pyridoxal 5'-phosphate serves as cofactor.

It carries out the reaction (1S,2R)-1-C-(indol-3-yl)glycerol 3-phosphate + L-serine = D-glyceraldehyde 3-phosphate + L-tryptophan + H2O. Its pathway is amino-acid biosynthesis; L-tryptophan biosynthesis; L-tryptophan from chorismate: step 5/5. Functionally, the beta subunit is responsible for the synthesis of L-tryptophan from indole and L-serine. The sequence is that of Tryptophan synthase beta chain (trpB) from Mycobacterium leprae (strain TN).